We begin with the raw amino-acid sequence, 460 residues long: 3-isopropylmalate dehydratase large subunit (460 aa).

The [4Fe-4S] cluster site is built by Cys-338, Cys-398, and Cys-401.

The protein belongs to the aconitase/IPM isomerase family. LeuC type 1 subfamily. As to quaternary structure, heterodimer of LeuC and LeuD. Requires [4Fe-4S] cluster as cofactor.

It catalyses the reaction (2R,3S)-3-isopropylmalate = (2S)-2-isopropylmalate. Its pathway is amino-acid biosynthesis; L-leucine biosynthesis; L-leucine from 3-methyl-2-oxobutanoate: step 2/4. In terms of biological role, catalyzes the isomerization between 2-isopropylmalate and 3-isopropylmalate, via the formation of 2-isopropylmaleate. The sequence is that of 3-isopropylmalate dehydratase large subunit from Streptococcus sanguinis (strain SK36).